The following is a 384-amino-acid chain: 8-amino-7-oxononanoate synthase (384 aa).

Residue Arg21 coordinates substrate. 108-109 (GF) contributes to the pyridoxal 5'-phosphate binding site. His133 lines the substrate pocket. Pyridoxal 5'-phosphate-binding residues include Ser179, His207, and Thr233. Lys236 carries the post-translational modification N6-(pyridoxal phosphate)lysine. Substrate is bound at residue Thr352.

It belongs to the class-II pyridoxal-phosphate-dependent aminotransferase family. BioF subfamily. As to quaternary structure, homodimer. The cofactor is pyridoxal 5'-phosphate.

The enzyme catalyses 6-carboxyhexanoyl-[ACP] + L-alanine + H(+) = (8S)-8-amino-7-oxononanoate + holo-[ACP] + CO2. It functions in the pathway cofactor biosynthesis; biotin biosynthesis. In terms of biological role, catalyzes the decarboxylative condensation of pimeloyl-[acyl-carrier protein] and L-alanine to produce 8-amino-7-oxononanoate (AON), [acyl-carrier protein], and carbon dioxide. The polypeptide is 8-amino-7-oxononanoate synthase (Shigella dysenteriae serotype 1 (strain Sd197)).